A 348-amino-acid polypeptide reads, in one-letter code: Erythronate-4-phosphate dehydrogenase (348 aa).

Positions 46 and 67 each coordinate substrate. Aspartate 147 contacts NAD(+). Arginine 209 is an active-site residue. Aspartate 233 lines the NAD(+) pocket. Glutamate 238 is an active-site residue. Catalysis depends on histidine 255, which acts as the Proton donor. Glycine 258 contributes to the NAD(+) binding site. Tyrosine 259 contributes to the substrate binding site.

The protein belongs to the D-isomer specific 2-hydroxyacid dehydrogenase family. PdxB subfamily. As to quaternary structure, homodimer.

The protein localises to the cytoplasm. It catalyses the reaction 4-phospho-D-erythronate + NAD(+) = (R)-3-hydroxy-2-oxo-4-phosphooxybutanoate + NADH + H(+). It functions in the pathway cofactor biosynthesis; pyridoxine 5'-phosphate biosynthesis; pyridoxine 5'-phosphate from D-erythrose 4-phosphate: step 2/5. Its function is as follows. Catalyzes the oxidation of erythronate-4-phosphate to 3-hydroxy-2-oxo-4-phosphonooxybutanoate. The chain is Erythronate-4-phosphate dehydrogenase from Bacteroides fragilis (strain ATCC 25285 / DSM 2151 / CCUG 4856 / JCM 11019 / LMG 10263 / NCTC 9343 / Onslow / VPI 2553 / EN-2).